A 56-amino-acid polypeptide reads, in one-letter code: Large ribosomal subunit protein eL20 (56 aa).

The tract at residues 1-24 is disordered; it reads MSTYTVRGSFPARDGPQQFEKEVE.

Belongs to the eukaryotic ribosomal protein eL20 family. As to quaternary structure, part of the 50S ribosomal subunit. Binds 23S rRNA.

This is Large ribosomal subunit protein eL20 from Haloarcula marismortui (strain ATCC 43049 / DSM 3752 / JCM 8966 / VKM B-1809) (Halobacterium marismortui).